The sequence spans 131 residues: Profilin (131 aa).

Belongs to the profilin family. In terms of assembly, occurs in many kinds of cells as a complex with monomeric actin in a 1:1 ratio.

The protein resides in the cytoplasm. It localises to the cytoskeleton. Functionally, binds to actin and affects the structure of the cytoskeleton. At high concentrations, profilin prevents the polymerization of actin, whereas it enhances it at low concentrations. By binding to PIP2, it inhibits the formation of IP3 and DG. In Prunus dulcis (Almond), this protein is Profilin.